The sequence spans 344 residues: Anthranilate phosphoribosyltransferase (344 aa).

5-phospho-alpha-D-ribose 1-diphosphate-binding positions include Gly-84, Gly-87–Asp-88, Thr-92, Asn-94–Thr-97, Lys-112–Ser-120, and Ser-124. Gly-84 contacts anthranilate. A Mg(2+)-binding site is contributed by Ser-96. Asn-115 contributes to the anthranilate binding site. Residue Arg-170 coordinates anthranilate. Residues Asp-229 and Glu-230 each coordinate Mg(2+).

It belongs to the anthranilate phosphoribosyltransferase family. In terms of assembly, homodimer. Requires Mg(2+) as cofactor.

The catalysed reaction is N-(5-phospho-beta-D-ribosyl)anthranilate + diphosphate = 5-phospho-alpha-D-ribose 1-diphosphate + anthranilate. It participates in amino-acid biosynthesis; L-tryptophan biosynthesis; L-tryptophan from chorismate: step 2/5. Catalyzes the transfer of the phosphoribosyl group of 5-phosphorylribose-1-pyrophosphate (PRPP) to anthranilate to yield N-(5'-phosphoribosyl)-anthranilate (PRA). In Xylella fastidiosa (strain 9a5c), this protein is Anthranilate phosphoribosyltransferase.